Reading from the N-terminus, the 1483-residue chain is Heme-responsive zinc finger transcription factor HAP1 (1483 aa).

Polar residues predominate over residues 1-50 (MSNTPYNSSVPSIASMTQSSVSRSPNMHTATTPGANTSSNSPPLHMSSDS). A disordered region spans residues 1–56 (MSNTPYNSSVPSIASMTQSSVSRSPNMHTATTPGANTSSNSPPLHMSSDSSKIKRK). Zn(2+) contacts are provided by Cys64, Cys67, Cys74, Cys81, Cys84, and Cys93. Residues 64–93 (CTICRKRKVKCDKLRPHCQQCTKTGVAHLC) constitute a DNA-binding region (zn(2)-C6 fungal-type). Positions 105 to 134 (EKELLKDNELKKLRERVKSLEKTLSKVHSS) form a coiled coil. Polar residues predominate over residues 162–176 (VNANTGSASSASHMH). The tract at residues 162 to 208 (VNANTGSASSASHMHQQQQQQQQQEQQQDFSRSANANANSSSLSISN) is disordered. Over residues 177-208 (QQQQQQQQQEQQQDFSRSANANANSSSLSISN) the composition is skewed to low complexity. Residues 244 to 444 (KGDPYLKLLW…NTIPHHQPQS (201 aa)) are heme-responsive; required for HMC formation. 6 HRM repeats span residues 280–285 (KCPINH), 299–304 (KCPVDH), 323–328 (KCPVDH), 347–352 (RCPVDH), 389–394 (KCPVDH), and 415–420 (RCPIDH). Composition is skewed to polar residues over residues 432–447 (STHN…SGSH) and 706–734 (QLNA…NPTL). 2 disordered regions span residues 432 to 458 (STHN…NRKH) and 706 to 767 (QLNA…KENQ). Residues 735–759 (NNNMSAATTNSSSRSGSADSRSGSN) are compositionally biased toward low complexity. An HRM 7 repeat occupies 1192–1197 (KCPVYQ). Residues 1384 to 1411 (TANTDTSANGSALSTLTSPQGSDLASNS) are disordered. The segment covering 1388–1411 (DTSANGSALSTLTSPQGSDLASNS) has biased composition (polar residues).

As to quaternary structure, binds DNA as a homodimer. Interacts with SRO9 and YDJ1. In the absence of heme, binds to at least four cellular proteins, including YDJ1 and SRO9, forming a high-molecular-weight complex (HMC) which results in repression of its activity and dictates its DNA-binding specificity.

It is found in the nucleus. Its function is as follows. Regulation of oxygen dependent gene expression. It modulates the expression of Iso-1 (CYP1) and Iso-2 (CYP3) cytochrome c. In response to heme, promotes transcription of genes encoding functions required for respiration, controlling oxidative damage and repression of anaerobic genes. Binds to the sequence 5'-CGGNNNTNNCGG-3'. This is Heme-responsive zinc finger transcription factor HAP1 (HAP1) from Saccharomyces cerevisiae (strain RM11-1a) (Baker's yeast).